A 270-amino-acid polypeptide reads, in one-letter code: G-box-binding factor 4 (270 aa).

A disordered region spans residues 1 to 46 (MASFKLMSSSNSDLSRRNSSSASSSPSIRSSHHLRPNPHADHSRIS). Over residues 8–29 (SSSNSDLSRRNSSSASSSPSIR) the composition is skewed to low complexity. A Phosphoserine modification is found at serine 27. A bZIP domain is found at 187–250 (AAQRQKRMIK…YKKLMEVLIP (64 aa)). A basic motif region spans residues 190 to 208 (RQKRMIKNRESAARSRERK). Residues 215-229 (LETLAAKLEEENEQL) are leucine-zipper. Positions 250-270 (PVDEKPRPPSRPLSRSHSLEW) are disordered. Residues 261-270 (PLSRSHSLEW) show a composition bias toward low complexity.

Belongs to the bZIP family. In terms of assembly, DNA-binding heterodimer with GBF2 and GBF3; non DNA-binding homodimer.

The protein localises to the nucleus. Functionally, binds to the G-box motif (5'-CCACGTGG-3') of the rbcS-1A gene promoter. G-box and G-box-like motifs are cis-acting elements defined in promoters of certain plant genes which are regulated by such diverse stimuli as light-induction or hormone control. In Arabidopsis thaliana (Mouse-ear cress), this protein is G-box-binding factor 4 (GBF4).